The chain runs to 212 residues: ATP-dependent Clp protease proteolytic subunit (212 aa).

Ser-114 acts as the Nucleophile in catalysis. His-139 is a catalytic residue.

This sequence belongs to the peptidase S14 family. In terms of assembly, fourteen ClpP subunits assemble into 2 heptameric rings which stack back to back to give a disk-like structure with a central cavity, resembling the structure of eukaryotic proteasomes.

It localises to the cytoplasm. It carries out the reaction Hydrolysis of proteins to small peptides in the presence of ATP and magnesium. alpha-casein is the usual test substrate. In the absence of ATP, only oligopeptides shorter than five residues are hydrolyzed (such as succinyl-Leu-Tyr-|-NHMec, and Leu-Tyr-Leu-|-Tyr-Trp, in which cleavage of the -Tyr-|-Leu- and -Tyr-|-Trp bonds also occurs).. In terms of biological role, cleaves peptides in various proteins in a process that requires ATP hydrolysis. Has a chymotrypsin-like activity. Plays a major role in the degradation of misfolded proteins. The sequence is that of ATP-dependent Clp protease proteolytic subunit from Azoarcus sp. (strain BH72).